A 275-amino-acid chain; its full sequence is NH(3)-dependent NAD(+) synthetase (275 aa).

Residue 46-53 (GISGGQDS) participates in ATP binding. Asp-52 is a Mg(2+) binding site. Residue Arg-140 coordinates deamido-NAD(+). An ATP-binding site is contributed by Thr-160. Mg(2+) is bound at residue Glu-165. Residues Lys-173 and Asp-180 each contribute to the deamido-NAD(+) site. 2 residues coordinate ATP: Lys-189 and Thr-211. Deamido-NAD(+) is bound at residue 260–261 (HK).

The protein belongs to the NAD synthetase family. In terms of assembly, homodimer.

The enzyme catalyses deamido-NAD(+) + NH4(+) + ATP = AMP + diphosphate + NAD(+) + H(+). Its pathway is cofactor biosynthesis; NAD(+) biosynthesis; NAD(+) from deamido-NAD(+) (ammonia route): step 1/1. Functionally, catalyzes the ATP-dependent amidation of deamido-NAD to form NAD. Uses ammonia as a nitrogen source. This is NH(3)-dependent NAD(+) synthetase from Shigella flexneri serotype 5b (strain 8401).